Reading from the N-terminus, the 314-residue chain is Probable serine/threonine-protein kinase WNK11 (314 aa).

A disordered region spans residues 1 to 22 (MMTCASSDDNESEKDKDSESFV). The 259-residue stretch at 31–289 (GRYGELLGSG…AAELLCDPFF (259 aa)) folds into the Protein kinase domain. 111–114 (TEIC) is an ATP binding site. The active-site Proton acceptor is D178. Residues 295-314 (DDDEDGENNDNNGAGRIVVS) form a disordered region.

Belongs to the protein kinase superfamily. Ser/Thr protein kinase family. WNK subfamily.

The catalysed reaction is L-seryl-[protein] + ATP = O-phospho-L-seryl-[protein] + ADP + H(+). It catalyses the reaction L-threonyl-[protein] + ATP = O-phospho-L-threonyl-[protein] + ADP + H(+). Its function is as follows. May regulate flowering time by modulating the photoperiod pathway. The polypeptide is Probable serine/threonine-protein kinase WNK11 (WNK11) (Arabidopsis thaliana (Mouse-ear cress)).